The following is a 219-amino-acid chain: GTP cyclohydrolase 1 (219 aa).

Residues 1–37 (MDAVLKSLSVRLPDAADKRSDTGRPERVTERPTRQEA) form a disordered region. The segment covering 14 to 37 (DAADKRSDTGRPERVTERPTRQEA) has biased composition (basic and acidic residues). Zn(2+) contacts are provided by Cys-108, His-111, and Cys-179.

The protein belongs to the GTP cyclohydrolase I family. In terms of assembly, homomer.

The enzyme catalyses GTP + H2O = 7,8-dihydroneopterin 3'-triphosphate + formate + H(+). It functions in the pathway cofactor biosynthesis; 7,8-dihydroneopterin triphosphate biosynthesis; 7,8-dihydroneopterin triphosphate from GTP: step 1/1. The protein is GTP cyclohydrolase 1 of Methylobacterium sp. (strain 4-46).